A 257-amino-acid polypeptide reads, in one-letter code: BTB/POZ domain-containing protein kctd15-like (257 aa).

Phosphoserine occurs at positions 9 and 12. Positions 30-100 (APVHIDVGGH…LRTSKLLLPE (71 aa)) constitute a BTB domain.

The chain is BTB/POZ domain-containing protein kctd15-like (kctd15l) from Danio rerio (Zebrafish).